Consider the following 537-residue polypeptide: Phosphoenolpyruvate carboxykinase (ATP) (537 aa).

Substrate contacts are provided by Arg61, Tyr195, and Lys201. ATP-binding positions include Lys201, His220, and 236–244; that span reads GLSGTGKTT. Lys201 and His220 together coordinate Mn(2+). Mn(2+) is bound at residue Asp257. Position 285 (Glu285) interacts with ATP. Positions 311–321 are enriched in basic and acidic residues; it reads PDFDNGSKTEN. The interval 311 to 342 is disordered; sequence PDFDNGSKTENTRSAYPLESIPNASPTGRAGQ. Arg323 serves as a coordination point for substrate. ATP contacts are provided by Arg323 and Thr448.

The protein belongs to the phosphoenolpyruvate carboxykinase (ATP) family. Requires Mn(2+) as cofactor.

The protein localises to the cytoplasm. The enzyme catalyses oxaloacetate + ATP = phosphoenolpyruvate + ADP + CO2. Its pathway is carbohydrate biosynthesis; gluconeogenesis. Functionally, involved in the gluconeogenesis. Catalyzes the conversion of oxaloacetate (OAA) to phosphoenolpyruvate (PEP) through direct phosphoryl transfer between the nucleoside triphosphate and OAA. The protein is Phosphoenolpyruvate carboxykinase (ATP) of Rhodopseudomonas palustris (strain BisB5).